A 326-amino-acid chain; its full sequence is MYGEWAAVNILMMSYVYLVQGFSIEHRAVKDVSLERSSRSVLERSEQQIRAASTLEELLQVAHSEDWKLWRCRLKLKSLANVDSRSTSHRSTRFAATFYDTETLKVIDEEWQRTQCSPRETCVEVASELGKTTNTFFKPPCVNVFRCGGCCNEESVMCMNTSTSYISKQLFEISVPLTSVPELVPVKIANHTGCKCLPTGPRHPYSIIRRSIQIPEEDQCPHSKKLCPVDMLWDNTKCKCVLQDENPLPGTEDHSYLQEPALCGPHMMFDEDRCECVCKAPCPGDLIQHPENCSCFECKESLESCCQKHKMFHPDTCRSMVFSLSP.

Residues 1-21 (MYGEWAAVNILMMSYVYLVQG) form the signal peptide. A propeptide spanning residues 22 to 93 (FSIEHRAVKD…SRSTSHRSTR (72 aa)) is cleaved from the precursor. 3 disulfides stabilise this stretch: Cys-116–Cys-158, Cys-147–Cys-194, and Cys-151–Cys-196. Residues Asn-160 and Asn-190 are each glycosylated (N-linked (GlcNAc...) asparagine). A propeptide spanning residues 211-326 (SIQIPEEDQC…CRSMVFSLSP (116 aa)) is cleaved from the precursor. One copy of the 1; approximate repeat lies at 227–242 (CPVDMLWDNTKCKCVL). A 4 X 16 AA repeats of C-X(10)-C-X-C-X(1,3)-C region spans residues 227-317 (CPVDMLWDNT…KHKMFHPDTC (91 aa)). Tandem repeats lie at residues 263–278 (CGPH…ECVC) and 282–298 (CPGD…CFEC). N-linked (GlcNAc...) asparagine glycosylation occurs at Asn-292. The stretch at 306–317 (CQKHKMFHPDTC) is one 4; truncated repeat.

The protein belongs to the PDGF/VEGF growth factor family. In terms of assembly, homodimer; non-covalent and antiparallel. Undergoes a complex proteolytic maturation which generates a variety of processed secreted forms with increased activity toward VEGFR-3 and VEGFR-2. VEGF-D first form an antiparallel homodimer linked by disulfide bonds before secretion. The fully processed VEGF-D is composed mostly of two VEGF homology domains (VHDs) bound by non-covalent interactions. Highly expressed in the spleen, kidney, lung, tongue, ovary and mammary gland.

It is found in the secreted. In terms of biological role, growth factor active in angiogenesis, lymphangiogenesis and endothelial cell growth, stimulating their proliferation and migration and also has effects on the permeability of blood vessels. May function in the formation of the venous and lymphatic vascular systems during embryogenesis, and also in the maintenance of differentiated lymphatic endothelium in adults. Binds and activates VEGFR-3 (Flt4) receptor. This chain is Vascular endothelial growth factor D, found in Rattus norvegicus (Rat).